Reading from the N-terminus, the 368-residue chain is Alanine racemase (368 aa).

Lysine 40 serves as the catalytic Proton acceptor; specific for D-alanine. Lysine 40 carries the N6-(pyridoxal phosphate)lysine modification. Arginine 134 contacts substrate. The Proton acceptor; specific for L-alanine role is filled by tyrosine 263. A substrate-binding site is contributed by methionine 310.

Belongs to the alanine racemase family. The cofactor is pyridoxal 5'-phosphate.

It catalyses the reaction L-alanine = D-alanine. Its pathway is amino-acid biosynthesis; D-alanine biosynthesis; D-alanine from L-alanine: step 1/1. Catalyzes the interconversion of L-alanine and D-alanine. May also act on other amino acids. In Listeria monocytogenes serotype 4b (strain CLIP80459), this protein is Alanine racemase (alr).